Reading from the N-terminus, the 514-residue chain is Transcription termination factor Rho (514 aa).

Residues 25–52 are disordered; it reads EPSSTPGPARNARRSNRRMRHPDKDVDK. A compositionally biased stretch (basic residues) spans 35 to 45; that stretch reads NARRSNRRMRH. Residues 141–216 form the Rho RNA-BD domain; that stretch reads LMYGEGTLEI…LRIEAINHAD (76 aa). Residues 259–264, 271–276, and R302 contribute to the ATP site; these read GFGQRG and RAGKTM.

Belongs to the Rho family. In terms of assembly, homohexamer. The homohexamer assembles into an open ring structure.

Facilitates transcription termination by a mechanism that involves Rho binding to the nascent RNA, activation of Rho's RNA-dependent ATPase activity, and release of the mRNA from the DNA template. The protein is Transcription termination factor Rho of Rhodopirellula baltica (strain DSM 10527 / NCIMB 13988 / SH1).